Reading from the N-terminus, the 392-residue chain is 2-oxoisovalerate dehydrogenase subunit beta, mitochondrial (392 aa).

Residues 1-50 constitute a mitochondrion transit peptide; it reads MAAVAAFAGWLLRLRAAGADGPWRRLCGAGLSRGFLQSASAYGAAAQRRQ. Tyr-152 is a binding site for thiamine diphosphate. Residues Gly-178, Leu-180, Thr-181, Cys-228, and Asp-231 each contribute to the K(+) site. Lys-232 is modified (N6-acetyllysine). Asn-233 contacts K(+). Lys-241 is subject to N6-acetyllysine.

Heterotetramer of 2 alpha/BCKDHA and 2 beta chains/BCKDHB that forms the branched-chain alpha-keto acid decarboxylase (E1) component of the BCKD complex. The branched-chain alpha-ketoacid dehydrogenase is a large complex composed of three major building blocks E1, E2 and E3. It is organized around E2, a 24-meric cubic core composed of DBT, to which are associated 6 to 12 copies of E1, and approximately 6 copies of the dehydrogenase E3, a DLD dimer. Requires thiamine diphosphate as cofactor.

Its subcellular location is the mitochondrion matrix. The enzyme catalyses N(6)-[(R)-lipoyl]-L-lysyl-[protein] + 3-methyl-2-oxobutanoate + H(+) = N(6)-[(R)-S(8)-2-methylpropanoyldihydrolipoyl]-L-lysyl-[protein] + CO2. In terms of biological role, together with BCKDHA forms the heterotetrameric E1 subunit of the mitochondrial branched-chain alpha-ketoacid dehydrogenase (BCKD) complex. The BCKD complex catalyzes the multi-step oxidative decarboxylation of alpha-ketoacids derived from the branched-chain amino-acids valine, leucine and isoleucine producing CO2 and acyl-CoA which is subsequently utilized to produce energy. The E1 subunit catalyzes the first step with the decarboxylation of the alpha-ketoacid forming an enzyme-product intermediate. A reductive acylation mediated by the lipoylamide cofactor of E2 extracts the acyl group from the E1 active site for the next step of the reaction. In Bos taurus (Bovine), this protein is 2-oxoisovalerate dehydrogenase subunit beta, mitochondrial (BCKDHB).